Here is a 233-residue protein sequence, read N- to C-terminus: Mediator of RNA polymerase II transcription subunit 8 (233 aa).

Positions 204-233 (RGEVDRGSSSQEGLSTNNEQSGDKDIIMAD) are disordered. The span at 210 to 223 (GSSSQEGLSTNNEQ) shows a compositional bias: polar residues. Residues 224 to 233 (SGDKDIIMAD) show a composition bias toward basic and acidic residues.

It belongs to the Mediator complex subunit 8 family. Component of the Mediator complex.

Its subcellular location is the nucleus. Its function is as follows. Component of the Mediator complex, a coactivator involved in the regulated transcription of nearly all RNA polymerase II-dependent genes. Mediator functions as a bridge to convey information from gene-specific regulatory proteins to the basal RNA polymerase II transcription machinery. Mediator is recruited to promoters by direct interactions with regulatory proteins and serves as a scaffold for the assembly of a functional preinitiation complex with RNA polymerase II and the general transcription factors. The sequence is that of Mediator of RNA polymerase II transcription subunit 8 (MED8) from Candida glabrata (strain ATCC 2001 / BCRC 20586 / JCM 3761 / NBRC 0622 / NRRL Y-65 / CBS 138) (Yeast).